The primary structure comprises 200 residues: Integrin beta-1-binding protein 1 (200 aa).

The span at 1–10 shows a compositional bias: basic residues; that stretch reads MFRKGKKRHS. The segment at 1–56 is disordered; sequence MFRKGKKRHSSSSSQSSEISTKSKSVDSSLGGLSRSSTVASLDTDSTKSSGQSNNN. The Nuclear localization signal signature appears at 6-7; sequence KK. Positions 11–29 are enriched in low complexity; that stretch reads SSSSQSSEISTKSKSVDSS. A compositionally biased stretch (polar residues) spans 34 to 56; it reads SRSSTVASLDTDSTKSSGQSNNN. Thr-38 is subject to Phosphothreonine; by CaMK2. Phosphoserine is present on Ser-41. The PID domain maps to 58–200; it reads DTCAEFRIKY…FDSVLTSEKP (143 aa). The interaction with KRIT1 stretch occupies residues 136-139; the sequence is YLII. Residues 139–141 form an interaction with ITGB1 region; that stretch reads IRM.

In terms of assembly, interacts (via N-terminus and PTB domain) with ROCK1. Found in a complex, at least composed of ITGB1BP1, KRIT1 and RAP1A. Interacts (via C-terminal region) with ITGB1 (via C-terminal cytoplasmic tail); the interaction prevents talin TLN1 binding to ITGB1 and KRIT1 and ITGB1 compete for the same binding site. Interacts with KRIT1 (via N-terminal NPXY motif); the interaction induces the opening conformation of KRIT1 and KRIT1 and ITGB1 compete for the same binding site. Isoform 2 does not interact with ITGB1. Interacts with CDC42 (GTP- or GDP-bound form); the interaction is increased with the CDC42-membrane bound forms and prevents both CDC42 activation and cell spreading. Interacts (via C-terminal domain region) with NME2. Interacts with FERMT2 and RAC1. In terms of processing, phosphorylation at Thr-38 seems to enhance integrin alpha5beta1-mediated cell adhesion. The degree of phosphorylation is regulated by integrin-dependent cell-matrix interaction.

It is found in the nucleus. It localises to the cytoplasm. The protein resides in the cytoskeleton. The protein localises to the cell membrane. Its subcellular location is the cell projection. It is found in the lamellipodium. It localises to the ruffle. Its function is as follows. Key regulator of the integrin-mediated cell-matrix interaction signaling by binding to the ITGB1 cytoplasmic tail and preventing the activation of integrin alpha-5/beta-1 (heterodimer of ITGA5 and ITGB1) by talin or FERMT1. Plays a role in cell proliferation, differentiation, spreading, adhesion and migration in the context of mineralization and bone development and angiogenesis. Stimulates cellular proliferation in a fibronectin-dependent manner. Involved in the regulation of beta-1 integrin-containing focal adhesion (FA) site dynamics by controlling its assembly rate during cell adhesion; inhibits beta-1 integrin clustering within FA by directly competing with talin TLN1, and hence stimulates osteoblast spreading and migration in a fibronectin- and/or collagen-dependent manner. Acts as a guanine nucleotide dissociation inhibitor (GDI) by regulating Rho family GTPases during integrin-mediated cell matrix adhesion; reduces the level of active GTP-bound form of both CDC42 and RAC1 GTPases upon cell adhesion to fibronectin. Stimulates the release of active CDC42 from the membranes to maintain it in an inactive cytoplasmic pool. Participates in the translocation of the Rho-associated protein kinase ROCK1 to membrane ruffles at cell leading edges of the cell membrane, leading to an increase of myoblast cell migration on laminin. Plays a role in bone mineralization at a late stage of osteoblast differentiation; modulates the dynamic formation of focal adhesions into fibrillar adhesions, which are adhesive structures responsible for fibronectin deposition and fibrillogenesis. Plays a role in blood vessel development; acts as a negative regulator of angiogenesis by attenuating endothelial cell proliferation and migration, lumen formation and sprouting angiogenesis by promoting AKT phosphorylation and inhibiting ERK1/2 phosphorylation through activation of the Notch signaling pathway. Promotes transcriptional activity of the MYC promoter. This is Integrin beta-1-binding protein 1 (ITGB1BP1) from Bos taurus (Bovine).